Consider the following 1270-residue polypeptide: DNA-directed RNA polymerase subunit beta (1270 aa).

It belongs to the RNA polymerase beta chain family. As to quaternary structure, the RNAP catalytic core consists of 2 alpha, 1 beta, 1 beta' and 1 omega subunit. When a sigma factor is associated with the core the holoenzyme is formed, which can initiate transcription.

The enzyme catalyses RNA(n) + a ribonucleoside 5'-triphosphate = RNA(n+1) + diphosphate. In terms of biological role, DNA-dependent RNA polymerase catalyzes the transcription of DNA into RNA using the four ribonucleoside triphosphates as substrates. This Bacteroides fragilis (strain ATCC 25285 / DSM 2151 / CCUG 4856 / JCM 11019 / LMG 10263 / NCTC 9343 / Onslow / VPI 2553 / EN-2) protein is DNA-directed RNA polymerase subunit beta.